Here is a 132-residue protein sequence, read N- to C-terminus: Small ribosomal subunit protein uS8 (132 aa).

The protein belongs to the universal ribosomal protein uS8 family. As to quaternary structure, part of the 30S ribosomal subunit. Contacts proteins S5 and S12.

In terms of biological role, one of the primary rRNA binding proteins, it binds directly to 16S rRNA central domain where it helps coordinate assembly of the platform of the 30S subunit. The sequence is that of Small ribosomal subunit protein uS8 from Francisella tularensis subsp. tularensis (strain FSC 198).